A 346-amino-acid chain; its full sequence is Cyclin-dependent kinase 20 (346 aa).

Residues 4–288 (YCILGRIGEG…ASQALLHQYF (285 aa)) form the Protein kinase domain. Residues 10-18 (IGEGAHGIV) and Lys-33 contribute to the ATP site. Catalysis depends on Asp-127, which acts as the Proton acceptor. The segment at 298–324 (SELPIPQRPGGPAPKAHPGPPHVHDFH) is disordered. Residues 303–318 (PQRPGGPAPKAHPGPP) show a composition bias toward pro residues.

It belongs to the protein kinase superfamily. CMGC Ser/Thr protein kinase family. CDC2/CDKX subfamily. As to quaternary structure, monomer. Interacts with MAK. Interacts with TBC1D32.

The protein localises to the nucleus. It is found in the cytoplasm. It localises to the cell projection. The protein resides in the cilium. The enzyme catalyses L-seryl-[protein] + ATP = O-phospho-L-seryl-[protein] + ADP + H(+). It carries out the reaction L-threonyl-[protein] + ATP = O-phospho-L-threonyl-[protein] + ADP + H(+). Functionally, involved in cell growth. Activates CDK2, a kinase involved in the control of the cell cycle, by phosphorylating residue 'Thr-160'. Required for high-level Shh responses in the developing neural tube. Together with TBC1D32, controls the structure of the primary cilium by coordinating assembly of the ciliary membrane and axoneme, allowing GLI2 to be properly activated in response to SHH signaling. In Mus musculus (Mouse), this protein is Cyclin-dependent kinase 20 (Cdk20).